The sequence spans 567 residues: Membrane protein insertase YidC (567 aa).

A helical transmembrane segment spans residues 3-23 (IQRIVLFAGLAIVSYLMVLAW). The segment at 32 to 80 (TEQVAEAQSSSDSSATNSTDDMILPEDNNAGGEEFATPETGSLASTSAN) is disordered. Over residues 40–52 (SSSDSSATNSTDD) the composition is skewed to low complexity. Positions 70–80 (ETGSLASTSAN) are enriched in polar residues. 5 helical membrane passes run 354 to 374 (FGWL…FYGL), 378 to 398 (WGVA…HLSA), 445 to 465 (GGCL…WVLF), 485 to 505 (MDPY…QMSL), and 522 to 542 (PLIF…YWLV).

The protein belongs to the OXA1/ALB3/YidC family. Type 1 subfamily. As to quaternary structure, interacts with the Sec translocase complex via SecD. Specifically interacts with transmembrane segments of nascent integral membrane proteins during membrane integration.

Its subcellular location is the cell inner membrane. Functionally, required for the insertion and/or proper folding and/or complex formation of integral membrane proteins into the membrane. Involved in integration of membrane proteins that insert both dependently and independently of the Sec translocase complex, as well as at least some lipoproteins. Aids folding of multispanning membrane proteins. In Marinobacter nauticus (strain ATCC 700491 / DSM 11845 / VT8) (Marinobacter aquaeolei), this protein is Membrane protein insertase YidC.